The primary structure comprises 143 residues: Cofilin (143 aa).

The ADF-H domain maps to Gly-5–Ser-137.

It belongs to the actin-binding proteins ADF family.

Its subcellular location is the cytoplasm. The protein resides in the cytoskeleton. It localises to the nucleus matrix. Functionally, controls reversibly actin polymerization and depolymerization in a pH-sensitive manner. It has the ability to bind G- and F-actin in a 1:1 ratio of cofilin to actin. Binding to F-actin is regulated by tropomyosin. It is the major component of intranuclear and cytoplasmic actin rods. Required for accumulation of actin at the cell division site via depolymerizing actin at the cell ends. In association with myosin II has a role in the assembly of the contractile ring via severing actin filaments. Involved in the maintenance of the contractile ring once formed. In association with profilin and capping protein, has a role in the mitotic reorganization of the actin cytoskeleton. This chain is Cofilin (COF1), found in Ogataea parapolymorpha (strain ATCC 26012 / BCRC 20466 / JCM 22074 / NRRL Y-7560 / DL-1) (Yeast).